Consider the following 276-residue polypeptide: Energy-coupling factor transporter ATP-binding protein EcfA1 (276 aa).

In terms of domain architecture, ABC transporter spans 2–237; that stretch reads IEIKNLKFKY…GSELVDLGLD (236 aa). Residue 37-44 coordinates ATP; the sequence is GHNGSGKS.

Belongs to the ABC transporter superfamily. Energy-coupling factor EcfA family. Forms a stable energy-coupling factor (ECF) transporter complex composed of 2 membrane-embedded substrate-binding proteins (S component), 2 ATP-binding proteins (A component) and 2 transmembrane proteins (T component).

It is found in the cell membrane. In terms of biological role, ATP-binding (A) component of a common energy-coupling factor (ECF) ABC-transporter complex. Unlike classic ABC transporters this ECF transporter provides the energy necessary to transport a number of different substrates. This is Energy-coupling factor transporter ATP-binding protein EcfA1 from Streptococcus thermophilus (strain CNRZ 1066).